Consider the following 273-residue polypeptide: 5-deoxy-glucuronate isomerase (273 aa).

The protein belongs to the isomerase IolB family.

It carries out the reaction 5-deoxy-D-glucuronate = 5-dehydro-2-deoxy-D-gluconate. It functions in the pathway polyol metabolism; myo-inositol degradation into acetyl-CoA; acetyl-CoA from myo-inositol: step 4/7. Involved in the isomerization of 5-deoxy-glucuronate (5DG) to 5-dehydro-2-deoxy-D-gluconate (DKG or 2-deoxy-5-keto-D-gluconate). The chain is 5-deoxy-glucuronate isomerase from Listeria monocytogenes serotype 4b (strain CLIP80459).